The primary structure comprises 434 residues: Alpha-enolase (434 aa).

Ser-40 contacts Mg(2+). Substrate is bound by residues His-158 and Glu-167. The active-site Proton donor is Glu-210. Mg(2+) contacts are provided by Asp-245, Glu-293, and Asp-318. Positions 293 and 318 each coordinate substrate. Lys-343 acts as the Proton acceptor in catalysis. Substrate is bound by residues 370 to 373 (SHRS) and Lys-394.

This sequence belongs to the enolase family. As to quaternary structure, homodimer. Requires Mg(2+) as cofactor.

It localises to the cytoplasm. The enzyme catalyses (2R)-2-phosphoglycerate = phosphoenolpyruvate + H2O. It functions in the pathway carbohydrate degradation; glycolysis; pyruvate from D-glyceraldehyde 3-phosphate: step 4/5. In Xenopus laevis (African clawed frog), this protein is Alpha-enolase (eno1).